The sequence spans 335 residues: Mycobacterial beta-ketoacyl-[acyl-carrier-protein] synthase III (335 aa).

Active-site residues include Cys122 and His258. Positions 259–263 are ACP-binding; it reads QANSR. The active site involves Asn289.

It belongs to the thiolase-like superfamily. FabH family. As to quaternary structure, homodimer.

The protein resides in the cytoplasm. It catalyses the reaction malonyl-[ACP] + dodecanoyl-CoA + H(+) = 3-oxotetradecanoyl-[ACP] + CO2 + CoA. The protein operates within lipid metabolism; fatty acid biosynthesis. Its pathway is lipid metabolism; mycolic acid biosynthesis. Functionally, catalyzes the condensation reaction of fatty acid synthesis by the addition to an acyl acceptor of two carbons from malonyl-ACP. Catalyzes the first condensation reaction which initiates fatty acid synthesis and may therefore play a role in governing the total rate of fatty acid production. Possesses both acetoacetyl-ACP synthase and acetyl transacylase activities. Its substrate specificity determines the biosynthesis of branched-chain and/or straight-chain of fatty acids. This is Mycobacterial beta-ketoacyl-[acyl-carrier-protein] synthase III from Mycolicibacterium paratuberculosis (strain ATCC BAA-968 / K-10) (Mycobacterium paratuberculosis).